The chain runs to 285 residues: Bifunctional protein FolD (285 aa).

Residues 166 to 168, Ser191, and Thr232 contribute to the NADP(+) site; that span reads GRS.

It belongs to the tetrahydrofolate dehydrogenase/cyclohydrolase family. As to quaternary structure, homodimer.

It catalyses the reaction (6R)-5,10-methylene-5,6,7,8-tetrahydrofolate + NADP(+) = (6R)-5,10-methenyltetrahydrofolate + NADPH. It carries out the reaction (6R)-5,10-methenyltetrahydrofolate + H2O = (6R)-10-formyltetrahydrofolate + H(+). It functions in the pathway one-carbon metabolism; tetrahydrofolate interconversion. Catalyzes the oxidation of 5,10-methylenetetrahydrofolate to 5,10-methenyltetrahydrofolate and then the hydrolysis of 5,10-methenyltetrahydrofolate to 10-formyltetrahydrofolate. The chain is Bifunctional protein FolD from Chloroflexus aurantiacus (strain ATCC 29366 / DSM 635 / J-10-fl).